A 399-amino-acid polypeptide reads, in one-letter code: Phosphoglycerate kinase (399 aa).

Residues 22–24 (DFN), arginine 38, 61–64 (HLGR), arginine 120, and arginine 153 contribute to the substrate site. ATP is bound by residues lysine 204, glutamate 326, and 352–355 (GGDT).

Belongs to the phosphoglycerate kinase family. Monomer.

The protein localises to the cytoplasm. It carries out the reaction (2R)-3-phosphoglycerate + ATP = (2R)-3-phospho-glyceroyl phosphate + ADP. It participates in carbohydrate degradation; glycolysis; pyruvate from D-glyceraldehyde 3-phosphate: step 2/5. The polypeptide is Phosphoglycerate kinase (Pelobacter propionicus (strain DSM 2379 / NBRC 103807 / OttBd1)).